A 276-amino-acid polypeptide reads, in one-letter code: Hydroxyethylthiazole kinase (276 aa).

Residues Met53 and Ala202 each contribute to the substrate site.

The protein belongs to the Thz kinase family. Mg(2+) serves as cofactor.

It catalyses the reaction 5-(2-hydroxyethyl)-4-methylthiazole + ATP = 4-methyl-5-(2-phosphooxyethyl)-thiazole + ADP + H(+). It participates in cofactor biosynthesis; thiamine diphosphate biosynthesis; 4-methyl-5-(2-phosphoethyl)-thiazole from 5-(2-hydroxyethyl)-4-methylthiazole: step 1/1. Thiazole kinase involved in thiamine salvage pathway. This is Hydroxyethylthiazole kinase (THIM) from Arabidopsis thaliana (Mouse-ear cress).